A 417-amino-acid polypeptide reads, in one-letter code: NADH-quinone oxidoreductase subunit D (417 aa).

The protein belongs to the complex I 49 kDa subunit family. In terms of assembly, NDH-1 is composed of 14 different subunits. Subunits NuoB, C, D, E, F, and G constitute the peripheral sector of the complex.

The protein resides in the cell inner membrane. The catalysed reaction is a quinone + NADH + 5 H(+)(in) = a quinol + NAD(+) + 4 H(+)(out). NDH-1 shuttles electrons from NADH, via FMN and iron-sulfur (Fe-S) centers, to quinones in the respiratory chain. The immediate electron acceptor for the enzyme in this species is believed to be ubiquinone. Couples the redox reaction to proton translocation (for every two electrons transferred, four hydrogen ions are translocated across the cytoplasmic membrane), and thus conserves the redox energy in a proton gradient. The protein is NADH-quinone oxidoreductase subunit D of Coxiella burnetii (strain CbuG_Q212) (Coxiella burnetii (strain Q212)).